Reading from the N-terminus, the 245-residue chain is Demethylmenaquinone methyltransferase (245 aa).

S-adenosyl-L-methionine-binding positions include Thr69, Asp90, and 118–119 (DC).

Belongs to the class I-like SAM-binding methyltransferase superfamily. MenG/UbiE family.

The catalysed reaction is a 2-demethylmenaquinol + S-adenosyl-L-methionine = a menaquinol + S-adenosyl-L-homocysteine + H(+). Its pathway is quinol/quinone metabolism; menaquinone biosynthesis; menaquinol from 1,4-dihydroxy-2-naphthoate: step 2/2. Methyltransferase required for the conversion of demethylmenaquinol (DMKH2) to menaquinol (MKH2). The polypeptide is Demethylmenaquinone methyltransferase (Porphyromonas gingivalis (strain ATCC 33277 / DSM 20709 / CIP 103683 / JCM 12257 / NCTC 11834 / 2561)).